A 193-amino-acid polypeptide reads, in one-letter code: Leucyl/phenylalanyl-tRNA--protein transferase (193 aa).

This sequence belongs to the L/F-transferase family.

It localises to the cytoplasm. It catalyses the reaction N-terminal L-lysyl-[protein] + L-leucyl-tRNA(Leu) = N-terminal L-leucyl-L-lysyl-[protein] + tRNA(Leu) + H(+). The enzyme catalyses N-terminal L-arginyl-[protein] + L-leucyl-tRNA(Leu) = N-terminal L-leucyl-L-arginyl-[protein] + tRNA(Leu) + H(+). The catalysed reaction is L-phenylalanyl-tRNA(Phe) + an N-terminal L-alpha-aminoacyl-[protein] = an N-terminal L-phenylalanyl-L-alpha-aminoacyl-[protein] + tRNA(Phe). Its function is as follows. Functions in the N-end rule pathway of protein degradation where it conjugates Leu, Phe and, less efficiently, Met from aminoacyl-tRNAs to the N-termini of proteins containing an N-terminal arginine or lysine. In Akkermansia muciniphila (strain ATCC BAA-835 / DSM 22959 / JCM 33894 / BCRC 81048 / CCUG 64013 / CIP 107961 / Muc), this protein is Leucyl/phenylalanyl-tRNA--protein transferase.